Reading from the N-terminus, the 133-residue chain is Ribonuclease P protein component (133 aa).

This sequence belongs to the RnpA family. Consists of a catalytic RNA component (M1 or rnpB) and a protein subunit.

It carries out the reaction Endonucleolytic cleavage of RNA, removing 5'-extranucleotides from tRNA precursor.. Its function is as follows. RNaseP catalyzes the removal of the 5'-leader sequence from pre-tRNA to produce the mature 5'-terminus. It can also cleave other RNA substrates such as 4.5S RNA. The protein component plays an auxiliary but essential role in vivo by binding to the 5'-leader sequence and broadening the substrate specificity of the ribozyme. The chain is Ribonuclease P protein component from Corynebacterium efficiens (strain DSM 44549 / YS-314 / AJ 12310 / JCM 11189 / NBRC 100395).